Consider the following 425-residue polypeptide: Serine--tRNA ligase (425 aa).

230–232 (TAE) contacts L-serine. Residue 261–263 (RSE) participates in ATP binding. Glutamate 284 provides a ligand contact to L-serine. Position 348–351 (348–351 (EISS)) interacts with ATP. Serine 384 is an L-serine binding site.

The protein belongs to the class-II aminoacyl-tRNA synthetase family. Type-1 seryl-tRNA synthetase subfamily. As to quaternary structure, homodimer. The tRNA molecule binds across the dimer.

It localises to the cytoplasm. It catalyses the reaction tRNA(Ser) + L-serine + ATP = L-seryl-tRNA(Ser) + AMP + diphosphate + H(+). The enzyme catalyses tRNA(Sec) + L-serine + ATP = L-seryl-tRNA(Sec) + AMP + diphosphate + H(+). It functions in the pathway aminoacyl-tRNA biosynthesis; selenocysteinyl-tRNA(Sec) biosynthesis; L-seryl-tRNA(Sec) from L-serine and tRNA(Sec): step 1/1. Functionally, catalyzes the attachment of serine to tRNA(Ser). Is also able to aminoacylate tRNA(Sec) with serine, to form the misacylated tRNA L-seryl-tRNA(Sec), which will be further converted into selenocysteinyl-tRNA(Sec). This is Serine--tRNA ligase from Streptococcus pyogenes serotype M3 (strain SSI-1).